Reading from the N-terminus, the 257-residue chain is MSRYLGPRLRVIRRIGKLRGFTRKKPFRRVFKGFGGFKGKVIPPGQHGLTKLLKTRPYDSSESDYLIRLKVKQRLRFNYGITERQLVNYVRKAKKIKESTGQVLLQFLEMRLDNIVFRLNMAPTIPAARQLISHGHIRVNNKKVNIPSYMCKPKDVISVAMKQRSLQLVNKNLQEYYRRMRFYKKRLEKTLPFILLKIKPLGLTSVTAAVELITKGNVRVNNKSVKTPNYICRPRDTVSLRTKQGIKKVFLKNYLKG.

2 S4 RNA-binding domains span residues Met110–Asn170 and Lys189–Leu255.

This sequence belongs to the universal ribosomal protein uS4 family. Part of the 30S ribosomal subunit. Contacts protein S5. The interaction surface between S4 and S5 is involved in control of translational fidelity.

Its subcellular location is the plastid. The protein resides in the chloroplast. One of the primary rRNA binding proteins, it binds directly to 16S rRNA where it nucleates assembly of the body of the 30S subunit. Its function is as follows. With S5 and S12 plays an important role in translational accuracy. The protein is Small ribosomal subunit protein uS4c (rps4) of Chlamydomonas reinhardtii (Chlamydomonas smithii).